Consider the following 119-residue polypeptide: Large ribosomal subunit protein bL20 (119 aa).

Belongs to the bacterial ribosomal protein bL20 family.

In terms of biological role, binds directly to 23S ribosomal RNA and is necessary for the in vitro assembly process of the 50S ribosomal subunit. It is not involved in the protein synthesizing functions of that subunit. In Acidovorax ebreus (strain TPSY) (Diaphorobacter sp. (strain TPSY)), this protein is Large ribosomal subunit protein bL20.